Consider the following 125-residue polypeptide: Large ribosomal subunit protein bL12 (125 aa).

This sequence belongs to the bacterial ribosomal protein bL12 family. As to quaternary structure, homodimer. Part of the ribosomal stalk of the 50S ribosomal subunit. Forms a multimeric L10(L12)X complex, where L10 forms an elongated spine to which 2 to 4 L12 dimers bind in a sequential fashion. Binds GTP-bound translation factors.

Its function is as follows. Forms part of the ribosomal stalk which helps the ribosome interact with GTP-bound translation factors. Is thus essential for accurate translation. The sequence is that of Large ribosomal subunit protein bL12 from Heliobacterium modesticaldum (strain ATCC 51547 / Ice1).